The chain runs to 514 residues: Transmembrane protein 117 (514 aa).

Over 1–15 (MGKDFRYYFQHPWSR) the chain is Cytoplasmic. Residues 16–36 (MIVAYLVIFFNFLIFAEDPVS) form a helical membrane-spanning segment. Residues 37-65 (HSQTEANVIVVGNCFSFVTNKYPRGVGWR) lie on the Extracellular side of the membrane. The helical transmembrane segment at 66–86 (ILKVLLWLLAILIGLIAGKFL) threads the bilayer. At 87–110 (FHQRLFGQLLRLKMFREDHGSWMT) the chain is on the cytoplasmic side. Residues 111–131 (MFFSTILFLFIFSHIYNTILL) form a helical membrane-spanning segment. Residues 132–154 (MDGNMGAYLITDYMGIRNESFMK) are Extracellular-facing. The helical transmembrane segment at 155 to 175 (LAAVGTWMGDFVTAWMVTDMM) threads the bilayer. At 176–198 (LQDKPYPDWGKSARAFWKKGNVR) the chain is on the cytoplasmic side. Residues 199–219 (IILFWTVLFTLTSVVVLVITT) form a helical membrane-spanning segment. Residues 220–239 (DWISWDKLNRGFLPSDEVSR) lie on the Extracellular side of the membrane. Residues 240–260 (AFLASFILVFDLLIVMQDWEF) form a helical membrane-spanning segment. Topologically, residues 261–295 (PHFMGDVDVNLPGLHTPHMQFKIPFFQKIFKEEYR) are cytoplasmic. The helical transmembrane segment at 296-316 (IHITGKWFNYGIIFLVLILDL) threads the bilayer. At 317–394 (NMWKNQIFYK…FIGASLDVKC (78 aa)) the chain is on the extracellular side. Residues Asn-353 and Asn-371 are each glycosylated (N-linked (GlcNAc...) asparagine). Residues 395 to 415 (LAFVPSLIAFVWFGFFIWFFG) traverse the membrane as a helical segment. Topologically, residues 416-514 (RFLKNEQGME…PAASQRMRTN (99 aa)) are cytoplasmic. A disordered region spans residues 430–450 (TYTRMKRKSPSEHSKDMGITR). The segment covering 438 to 448 (SPSEHSKDMGI) has biased composition (basic and acidic residues). Position 453 is a phosphothreonine (Thr-453). The disordered stretch occupies residues 494–514 (ESTSEVEAEQEPAASQRMRTN).

It belongs to the TMEM117 family.

It localises to the cell membrane. In terms of biological role, involved in endoplasmic reticulum (ER) stress-induced cell death pathway. The polypeptide is Transmembrane protein 117 (Tmem117) (Mus musculus (Mouse)).